The primary structure comprises 311 residues: Probable 5-dehydro-4-deoxyglucarate dehydratase (311 aa).

This sequence belongs to the DapA family.

The catalysed reaction is 5-dehydro-4-deoxy-D-glucarate + H(+) = 2,5-dioxopentanoate + CO2 + H2O. It functions in the pathway carbohydrate acid metabolism; D-glucarate degradation; 2,5-dioxopentanoate from D-glucarate: step 2/2. This chain is Probable 5-dehydro-4-deoxyglucarate dehydratase, found in Ralstonia nicotianae (strain ATCC BAA-1114 / GMI1000) (Ralstonia solanacearum).